Consider the following 182-residue polypeptide: Bifunctional protein PyrR (182 aa).

The PRPP-binding signature appears at V100–T112.

Belongs to the purine/pyrimidine phosphoribosyltransferase family. PyrR subfamily. As to quaternary structure, homodimer and homohexamer; in equilibrium.

The catalysed reaction is UMP + diphosphate = 5-phospho-alpha-D-ribose 1-diphosphate + uracil. Its function is as follows. Regulates transcriptional attenuation of the pyrimidine nucleotide (pyr) operon by binding in a uridine-dependent manner to specific sites on pyr mRNA. This disrupts an antiterminator hairpin in the RNA and favors formation of a downstream transcription terminator, leading to a reduced expression of downstream genes. In terms of biological role, also displays a weak uracil phosphoribosyltransferase activity which is not physiologically significant. This Natranaerobius thermophilus (strain ATCC BAA-1301 / DSM 18059 / JW/NM-WN-LF) protein is Bifunctional protein PyrR.